A 226-amino-acid chain; its full sequence is Putative N-acetylmannosamine-6-phosphate 2-epimerase 1 (226 aa).

Belongs to the NanE family.

It catalyses the reaction an N-acyl-D-glucosamine 6-phosphate = an N-acyl-D-mannosamine 6-phosphate. Its pathway is amino-sugar metabolism; N-acetylneuraminate degradation; D-fructose 6-phosphate from N-acetylneuraminate: step 3/5. Functionally, converts N-acetylmannosamine-6-phosphate (ManNAc-6-P) to N-acetylglucosamine-6-phosphate (GlcNAc-6-P). The sequence is that of Putative N-acetylmannosamine-6-phosphate 2-epimerase 1 (nanE1) from Salmonella typhimurium (strain LT2 / SGSC1412 / ATCC 700720).